The sequence spans 283 residues: uncharacterized protein (283 aa).

This is an uncharacterized protein from Halobacterium salinarum (strain ATCC 700922 / JCM 11081 / NRC-1) (Halobacterium halobium).